Consider the following 147-residue polypeptide: Large ribosomal subunit protein bL9 (147 aa).

It belongs to the bacterial ribosomal protein bL9 family.

In terms of biological role, binds to the 23S rRNA. The polypeptide is Large ribosomal subunit protein bL9 (Mycoplasma capricolum subsp. capricolum (strain California kid / ATCC 27343 / NCTC 10154)).